The primary structure comprises 382 residues: Putative oxidoreductase C1F5.03c (382 aa).

The chain crosses the membrane as a helical span at residues 7–27 (IVIVGGGITGVSCLYFLAHHP).

Belongs to the TDA3 family.

The protein localises to the cytoplasm. Its subcellular location is the membrane. Its function is as follows. Putative oxidoreductase that negatively regulates the retrieval of cargo from late endosomes to the Golgi. The chain is Putative oxidoreductase C1F5.03c from Schizosaccharomyces pombe (strain 972 / ATCC 24843) (Fission yeast).